The following is a 211-amino-acid chain: Suppressor of RNA silencing p3 (211 aa).

The protein belongs to the tenuiviruses p3 protein family. As to quaternary structure, homodimer.

The protein resides in the host cytoplasm. Its function is as follows. Acts as a suppressor of RNA-mediated gene silencing, also known as post-transcriptional gene silencing (PTGS), presumably through the binding of dsRNA. This is Suppressor of RNA silencing p3 from Avena sativa (Oat).